Reading from the N-terminus, the 197-residue chain is dITP/XTP pyrophosphatase (197 aa).

A substrate-binding site is contributed by 9–14 (TNNLNK). Positions 42 and 71 each coordinate Mg(2+). Asp71 serves as the catalytic Proton acceptor. Residues Ser72, 153–156 (FGYD), Lys176, and 181–182 (HR) each bind substrate.

The protein belongs to the HAM1 NTPase family. Homodimer. The cofactor is Mg(2+).

It catalyses the reaction XTP + H2O = XMP + diphosphate + H(+). The enzyme catalyses dITP + H2O = dIMP + diphosphate + H(+). The catalysed reaction is ITP + H2O = IMP + diphosphate + H(+). Its function is as follows. Pyrophosphatase that catalyzes the hydrolysis of nucleoside triphosphates to their monophosphate derivatives, with a high preference for the non-canonical purine nucleotides XTP (xanthosine triphosphate), dITP (deoxyinosine triphosphate) and ITP. Seems to function as a house-cleaning enzyme that removes non-canonical purine nucleotides from the nucleotide pool, thus preventing their incorporation into DNA/RNA and avoiding chromosomal lesions. This is dITP/XTP pyrophosphatase from Leptospira interrogans serogroup Icterohaemorrhagiae serovar copenhageni (strain Fiocruz L1-130).